The following is a 191-amino-acid chain: Fe/S biogenesis protein NfuA (191 aa).

[4Fe-4S] cluster-binding residues include cysteine 149 and cysteine 152.

This sequence belongs to the NfuA family. In terms of assembly, homodimer. [4Fe-4S] cluster serves as cofactor.

Its function is as follows. Involved in iron-sulfur cluster biogenesis. Binds a 4Fe-4S cluster, can transfer this cluster to apoproteins, and thereby intervenes in the maturation of Fe/S proteins. Could also act as a scaffold/chaperone for damaged Fe/S proteins. This is Fe/S biogenesis protein NfuA from Escherichia coli O7:K1 (strain IAI39 / ExPEC).